A 269-amino-acid chain; its full sequence is GATA zinc finger domain-containing protein 1 (269 aa).

A GATA-type zinc finger spans residues 9 to 33 (CSVCKTTSSSMWKKGAQGEILCHHC). The interval 63-115 (ATFASTSATPPQSNGGGGGKQSKQEIHRRSARLRNTKYKSAPAAEKKVSTKGK) is disordered. A Glycyl lysine isopeptide (Lys-Gly) (interchain with G-Cter in SUMO2) cross-link involves residue K262.

In terms of assembly, component of a chromatin complex, at least composed of KDM5A, GATAD1 and EMSY. As to expression, ubiquitously expressed among various tissue types. Expressed in left ventricular myocytes.

The protein localises to the nucleus. Component of some chromatin complex recruited to chromatin sites methylated 'Lys-4' of histone H3 (H3K4me), with a preference for trimethylated form (H3K4me3). This Homo sapiens (Human) protein is GATA zinc finger domain-containing protein 1 (GATAD1).